We begin with the raw amino-acid sequence, 68 residues long: MAKNLTPSDAKLEITQIKGVIGAKQNQKATLRSLGLKRIGHTVVRNADAVTVGMLNTVPHLVNVEEAK.

The protein belongs to the universal ribosomal protein uL30 family. As to quaternary structure, part of the 50S ribosomal subunit.

The protein is Large ribosomal subunit protein uL30 of Paenarthrobacter aurescens (strain TC1).